The primary structure comprises 255 residues: Triosephosphate isomerase (255 aa).

A substrate-binding site is contributed by 10–12; sequence NWK. His96 (electrophile) is an active-site residue. Glu168 functions as the Proton acceptor in the catalytic mechanism. Residues Gly174, Ser213, and 234-235 each bind substrate; that span reads GG.

The protein belongs to the triosephosphate isomerase family. Homodimer.

The protein resides in the cytoplasm. It catalyses the reaction D-glyceraldehyde 3-phosphate = dihydroxyacetone phosphate. It functions in the pathway carbohydrate biosynthesis; gluconeogenesis. It participates in carbohydrate degradation; glycolysis; D-glyceraldehyde 3-phosphate from glycerone phosphate: step 1/1. Functionally, involved in the gluconeogenesis. Catalyzes stereospecifically the conversion of dihydroxyacetone phosphate (DHAP) to D-glyceraldehyde-3-phosphate (G3P). The polypeptide is Triosephosphate isomerase (Histophilus somni (strain 129Pt) (Haemophilus somnus)).